We begin with the raw amino-acid sequence, 106 residues long: Urease subunit beta (106 aa).

It belongs to the urease beta subunit family. As to quaternary structure, heterotrimer of UreA (gamma), UreB (beta) and UreC (alpha) subunits. Three heterotrimers associate to form the active enzyme.

It is found in the cytoplasm. It carries out the reaction urea + 2 H2O + H(+) = hydrogencarbonate + 2 NH4(+). It participates in nitrogen metabolism; urea degradation; CO(2) and NH(3) from urea (urease route): step 1/1. This Prochlorococcus marinus (strain MIT 9215) protein is Urease subunit beta.